The following is a 341-amino-acid chain: Heterogeneous nuclear ribonucleoproteins A2/B1 (341 aa).

RRM domains lie at R9–K92 and K100–Q179. K10 participates in a covalent cross-link: Glycyl lysine isopeptide (Lys-Gly) (interchain with G-Cter in SUMO2). S17 bears the Phosphoserine mark. Omega-N-methylarginine is present on R26. S73 is modified (phosphoserine). The residue at position 92 (K92) is an N6,N6-dimethyllysine; alternate. K92 is covalently cross-linked (Glycyl lysine isopeptide (Lys-Gly) (interchain with G-Cter in SUMO2); alternate). Residues K100, K108, and K125 each participate in a glycyl lysine isopeptide (Lys-Gly) (interchain with G-Cter in SUMO2) cross-link. The residue at position 128 (T128) is a Phosphothreonine. Position 137 is a phosphoserine (S137). Residue K140 forms a Glycyl lysine isopeptide (Lys-Gly) (interchain with G-Cter in SUMO2) linkage. T147 bears the Phosphothreonine mark. Residues K156 and K161 each participate in a glycyl lysine isopeptide (Lys-Gly) (interchain with G-Cter in SUMO2); alternate cross-link. 2 positions are modified to N6-acetyllysine; alternate: K156 and K161. Position 164 is a phosphothreonine (T164). K174 participates in a covalent cross-link: Glycyl lysine isopeptide (Lys-Gly) (interchain with G-Cter in SUMO2). Residues S177 and S189 each carry the phosphoserine modification. The segment at M181–Y341 is disordered. Over residues G190–P211 the composition is skewed to gly residues. R191 carries the asymmetric dimethylarginine; alternate modification. Dimethylated arginine; alternate is present on R191. The residue at position 191 (R191) is an Omega-N-methylarginine; alternate. S200 is subject to Phosphoserine. Residue R201 is modified to Asymmetric dimethylarginine; alternate. Dimethylated arginine; alternate is present on R201. Omega-N-methylarginine; alternate is present on R201. S213 carries the post-translational modification Phosphoserine. The residue at position 216 (R216) is an Omega-N-methylarginine. 2 positions are modified to phosphoserine: S219 and S224. Position 226 is an omega-N-methylarginine (R226). S247 is subject to Phosphoserine. An Asymmetric dimethylarginine; alternate modification is found at R254. Position 254 is an omega-N-methylarginine; alternate (R254). Residues Q296 to Y335 form a nuclear targeting sequence region. Residues N308–Y341 are compositionally biased toward gly residues. Position 312 is a phosphoserine (S312). R313 carries the post-translational modification Omega-N-methylarginine. Y319 is subject to Phosphotyrosine. Phosphoserine is present on residues S329 and S332. A Phosphotyrosine modification is found at Y335. Residue R338 is modified to Omega-N-methylarginine.

Identified in the spliceosome C complex. Identified in a IGF2BP1-dependent mRNP granule complex containing untranslated mRNAs. Interacts with IGF2BP1. Interacts with C9orf72. Interacts with DGCR8. Interacts with TARDBP. Interacts with CKAP5. Interacts with PPIA/CYPA. Interacts (via C-terminus) with FAM76B; the interaction results in retention of HNRNPA2B1 in the nucleus and inhibition of the NF-kappa-B-mediated inflammatory pathway. Interacts with NF-kappa-B inhibitors NFKBIA and NFKBIE; the interaction may be mediated by the RRM2 domain of HNRNPA2B1, and HNRNPA2B1 may interact simultaneously with FAM76B and either NFKBIA or NFKBIE to form a complex. Sumoylated in exosomes, promoting miRNAs-binding. In terms of processing, asymmetric dimethylation at Arg-254 constitutes the major methylation site. According to a report, methylation affects subcellular location and promotes nuclear localization. According to another report, methylation at Arg-254 does not influence nucleocytoplasmic shuttling.

Its subcellular location is the nucleus. The protein localises to the nucleoplasm. It localises to the cytoplasmic granule. It is found in the secreted. The protein resides in the extracellular exosome. In terms of biological role, heterogeneous nuclear ribonucleoprotein (hnRNP) that associates with nascent pre-mRNAs, packaging them into hnRNP particles. The hnRNP particle arrangement on nascent hnRNA is non-random and sequence-dependent and serves to condense and stabilize the transcripts and minimize tangling and knotting. Packaging plays a role in various processes such as transcription, pre-mRNA processing, RNA nuclear export, subcellular location, mRNA translation and stability of mature mRNAs. Forms hnRNP particles with at least 20 other different hnRNP and heterogeneous nuclear RNA in the nucleus. Involved in transport of specific mRNAs to the cytoplasm in oligodendrocytes and neurons: acts by specifically recognizing and binding the A2RE (21 nucleotide hnRNP A2 response element) or the A2RE11 (derivative 11 nucleotide oligonucleotide) sequence motifs present on some mRNAs, and promotes their transport to the cytoplasm. Specifically binds single-stranded telomeric DNA sequences, protecting telomeric DNA repeat against endonuclease digestion. Also binds other RNA molecules, such as primary miRNA (pri-miRNAs): acts as a nuclear 'reader' of the N6-methyladenosine (m6A) mark by specifically recognizing and binding a subset of nuclear m6A-containing pri-miRNAs. Binding to m6A-containing pri-miRNAs promotes pri-miRNA processing by enhancing binding of DGCR8 to pri-miRNA transcripts. Involved in miRNA sorting into exosomes following sumoylation, possibly by binding (m6A)-containing pre-miRNAs. Acts as a regulator of efficiency of mRNA splicing, possibly by binding to m6A-containing pre-mRNAs. Plays a role in the splicing of pyruvate kinase PKM by binding repressively to sequences flanking PKM exon 9, inhibiting exon 9 inclusion and resulting in exon 10 inclusion and production of the PKM M2 isoform. The protein is Heterogeneous nuclear ribonucleoproteins A2/B1 (HNRNPA2B1) of Bos taurus (Bovine).